We begin with the raw amino-acid sequence, 182 residues long: NADH-quinone oxidoreductase subunit I (182 aa).

4Fe-4S ferredoxin-type domains lie at 52-82 (LTRDPDGEERCVACNLCAVACPVGCISLQKA) and 92-121 (EFFRINFSRCIFCGLCEEACPTTAIQLTPD). [4Fe-4S] cluster-binding residues include Cys62, Cys65, Cys68, Cys72, Cys101, Cys104, Cys107, and Cys111.

The protein belongs to the complex I 23 kDa subunit family. In terms of assembly, NDH-1 is composed of 13 different subunits. Subunits NuoA, H, J, K, L, M, N constitute the membrane sector of the complex. [4Fe-4S] cluster serves as cofactor.

The protein resides in the cell inner membrane. The catalysed reaction is a quinone + NADH + 5 H(+)(in) = a quinol + NAD(+) + 4 H(+)(out). NDH-1 shuttles electrons from NADH, via FMN and iron-sulfur (Fe-S) centers, to quinones in the respiratory chain. The immediate electron acceptor for the enzyme in this species is believed to be ubiquinone. Couples the redox reaction to proton translocation (for every two electrons transferred, four hydrogen ions are translocated across the cytoplasmic membrane), and thus conserves the redox energy in a proton gradient. The chain is NADH-quinone oxidoreductase subunit I from Pseudomonas entomophila (strain L48).